Consider the following 169-residue polypeptide: Ribosome maturation factor RimM (169 aa).

The 74-residue stretch at 94 to 167 (ENEFYFHEII…KITIEVMEGL (74 aa)) folds into the PRC barrel domain.

This sequence belongs to the RimM family. Binds ribosomal protein uS19.

It localises to the cytoplasm. Its function is as follows. An accessory protein needed during the final step in the assembly of 30S ribosomal subunit, possibly for assembly of the head region. Essential for efficient processing of 16S rRNA. May be needed both before and after RbfA during the maturation of 16S rRNA. It has affinity for free ribosomal 30S subunits but not for 70S ribosomes. The polypeptide is Ribosome maturation factor RimM (Listeria welshimeri serovar 6b (strain ATCC 35897 / DSM 20650 / CCUG 15529 / CIP 8149 / NCTC 11857 / SLCC 5334 / V8)).